Reading from the N-terminus, the 479-residue chain is MFS-type transporter lnaF (479 aa).

The next 11 membrane-spanning stretches (helical) occupy residues 47-67, 71-91, 104-124, 136-156, 177-197, 208-228, 250-270, 283-303, 306-326, 344-364, and 372-392; these read WIYLVALALFEIGSLVCGFTP, GLIIGRAITGLGSAGLFSGAI, LLCISVIMCLFGVADVAGPLI, WCFYINLPFGGLTALAIVFLL, LVGLLFLFPAVICLLLVLSWG, IIGLIVGFTALILVFIVVQWW, IFSFCITGAMMAFTYHLPIWF, LMSIPTILGMTICSLLSAVLV, IGFYTPFMYAAPVLSVIGAGL, IPFGIGLGIGLSQPMVVVQAV, and LAIAITAFMESLGGSVAISVA. The N-linked (GlcNAc...) asparagine glycan is linked to N416. A helical membrane pass occupies residues 442-462; it reads LAITQALYVGVALSSLAIVGA.

The protein belongs to the major facilitator superfamily. TCR/Tet family.

Its subcellular location is the cell membrane. MFS-type transporter; part of the lnb gene cluster that mediates the biosynthesis of diastereomeric piperazines. Lna and lnb clusters encode sets of enzymes that produce overlapping sets of previously undescribed metabolites such as piperazinomycin-like metabolites or morpholine. The lna and lnb biosynthetic pathways appear to be part of a signaling network that controls the formation of sclerotia, a resilient overwintering structure. May be involved in the secretion of the metabolites produced by the lna and lnb clusters. The sequence is that of MFS-type transporter lnaF from Aspergillus flavus (strain ATCC 200026 / FGSC A1120 / IAM 13836 / NRRL 3357 / JCM 12722 / SRRC 167).